The chain runs to 672 residues: Hydroxyproline O-galactosyltransferase GALT5 (672 aa).

Residues 1–28 (MKKPKLSKVEKIDKIDLFSSLWKQRSVR) are Cytoplasmic-facing. Residues 29 to 49 (VIMAIGFLYLVIVSVEIPLVF) traverse the membrane as a helical; Signal-anchor for type II membrane protein segment. Residues 50–672 (KSWSSSSVPL…QNKPECCNMR (623 aa)) lie on the Lumenal side of the membrane. Residues 191–392 (KLMELPCGLT…DIDVHSVFVA (202 aa)) enclose the Galectin domain. Asn306 and Asn620 each carry an N-linked (GlcNAc...) asparagine glycan.

Belongs to the glycosyltransferase 31 family. Mn(2+) serves as cofactor. In terms of tissue distribution, expressed in juvenile leaves, stems, cauline leaves and siliques.

The protein resides in the golgi apparatus membrane. Its pathway is protein modification; protein glycosylation. Its function is as follows. Possesses hydroxyproline O-galactosyltransferase activity. Transfers galactose from UDP-galactose to hydroxyproline residues in the arabinogalactan proteins (AGPs). Is specific for AGPs containing non-contiguous peptidyl hydroxyproline residues. Utilizes UDP-galactose solely as sugar donor. The addition of galactose onto the peptidyl hydroxyproline residues in AGP core proteins represents the first committed step in arabinogalactan polysaccharide addition. AGP glycans play essential roles in both vegetative and reproductive plant growth. In Arabidopsis thaliana (Mouse-ear cress), this protein is Hydroxyproline O-galactosyltransferase GALT5.